The sequence spans 409 residues: Dihydroorotase (409 aa).

Zn(2+)-binding residues include His-57 and His-59. Substrate is bound by residues 59 to 61 (HLR) and Asn-91. Zn(2+)-binding residues include Lys-139, His-168, His-208, and Asp-276. N6-carboxylysine is present on Lys-139. Asp-276 is an active-site residue. Substrate-binding positions include His-280 and 290 to 291 (AG).

The protein belongs to the metallo-dependent hydrolases superfamily. DHOase family. Class I DHOase subfamily. Zn(2+) is required as a cofactor.

It carries out the reaction (S)-dihydroorotate + H2O = N-carbamoyl-L-aspartate + H(+). It participates in pyrimidine metabolism; UMP biosynthesis via de novo pathway; (S)-dihydroorotate from bicarbonate: step 3/3. Functionally, catalyzes the reversible cyclization of carbamoyl aspartate to dihydroorotate. The sequence is that of Dihydroorotase from Thermococcus kodakarensis (strain ATCC BAA-918 / JCM 12380 / KOD1) (Pyrococcus kodakaraensis (strain KOD1)).